Here is a 301-residue protein sequence, read N- to C-terminus: 3-methyl-2-oxobutanoate hydroxymethyltransferase (301 aa).

The segment covering 1-28 (MATSNSSDSSMSAEVPAPYGNGPANAPA) has biased composition (low complexity). Positions 1–37 (MATSNSSDSSMSAEVPAPYGNGPANAPATPSDTAKKP) are disordered. Aspartate 82 and aspartate 121 together coordinate Mg(2+). 3-methyl-2-oxobutanoate is bound by residues 82–83 (DS), aspartate 121, and lysine 151. Glutamate 153 contacts Mg(2+). The Proton acceptor role is filled by glutamate 219.

It belongs to the PanB family. As to quaternary structure, homodecamer; pentamer of dimers. Requires Mg(2+) as cofactor.

The protein localises to the cytoplasm. It catalyses the reaction 3-methyl-2-oxobutanoate + (6R)-5,10-methylene-5,6,7,8-tetrahydrofolate + H2O = 2-dehydropantoate + (6S)-5,6,7,8-tetrahydrofolate. It participates in cofactor biosynthesis; (R)-pantothenate biosynthesis; (R)-pantoate from 3-methyl-2-oxobutanoate: step 1/2. Catalyzes the reversible reaction in which hydroxymethyl group from 5,10-methylenetetrahydrofolate is transferred onto alpha-ketoisovalerate to form ketopantoate. The polypeptide is 3-methyl-2-oxobutanoate hydroxymethyltransferase (Arthrobacter sp. (strain FB24)).